Here is a 949-residue protein sequence, read N- to C-terminus: Bifunctional uridylyltransferase/uridylyl-removing enzyme (949 aa).

The segment at 1–377 (MARHETSFPE…RFRNRVRKIP (377 aa)) is uridylyltransferase. The interval 378-733 (GTLDFVDDGG…VRTHDFHAIT (356 aa)) is uridylyl-removing. Residues 494 to 610 (VDEHLLRAVD…VDFAERVQSL (117 aa)) form the HD domain. 2 consecutive ACT domains span residues 734-815 (EITV…DVIA) and 845-926 (VIEV…ERMP). The segment at 925 to 949 (MPSGIIAPTPVPRASHGSKATKAET) is disordered.

It belongs to the GlnD family. Mg(2+) serves as cofactor.

The enzyme catalyses [protein-PII]-L-tyrosine + UTP = [protein-PII]-uridylyl-L-tyrosine + diphosphate. It carries out the reaction [protein-PII]-uridylyl-L-tyrosine + H2O = [protein-PII]-L-tyrosine + UMP + H(+). Uridylyltransferase (UTase) activity is inhibited by glutamine, while glutamine activates uridylyl-removing (UR) activity. In terms of biological role, modifies, by uridylylation and deuridylylation, the PII regulatory proteins (GlnB and homologs), in response to the nitrogen status of the cell that GlnD senses through the glutamine level. Under low glutamine levels, catalyzes the conversion of the PII proteins and UTP to PII-UMP and PPi, while under higher glutamine levels, GlnD hydrolyzes PII-UMP to PII and UMP (deuridylylation). Thus, controls uridylylation state and activity of the PII proteins, and plays an important role in the regulation of nitrogen fixation and metabolism. The polypeptide is Bifunctional uridylyltransferase/uridylyl-removing enzyme (Sinorhizobium medicae (strain WSM419) (Ensifer medicae)).